Consider the following 253-residue polypeptide: Probable transcriptional regulatory protein A1G_04400 (253 aa).

The interval 1–21 (MAGHSKFKNIQHRKGAQDKKR) is disordered.

The protein belongs to the TACO1 family.

Its subcellular location is the cytoplasm. The sequence is that of Probable transcriptional regulatory protein A1G_04400 from Rickettsia rickettsii (strain Sheila Smith).